The following is an 833-amino-acid chain: Leucine--tRNA ligase (833 aa).

The 'HIGH' region signature appears at 41–52 (PYPSGAGLHVGH). Positions 610–614 (KMSKS) match the 'KMSKS' region motif. ATP is bound at residue lysine 613.

Belongs to the class-I aminoacyl-tRNA synthetase family.

It is found in the cytoplasm. The catalysed reaction is tRNA(Leu) + L-leucine + ATP = L-leucyl-tRNA(Leu) + AMP + diphosphate. The polypeptide is Leucine--tRNA ligase (Streptococcus pyogenes serotype M28 (strain MGAS6180)).